A 586-amino-acid chain; its full sequence is CTP synthase 2 (586 aa).

Residues S300 to Y554 form the Glutamine amidotransferase type-1 domain. Catalysis depends on for GATase activity residues C399, H526, and E528. Residues S564–S586 are disordered. S568, S571, and S574 each carry phosphoserine.

It belongs to the CTP synthase family.

It catalyses the reaction UTP + L-glutamine + ATP + H2O = CTP + L-glutamate + ADP + phosphate + 2 H(+). The protein operates within pyrimidine metabolism; CTP biosynthesis via de novo pathway; CTP from UDP: step 2/2. Its function is as follows. Catalyzes the ATP-dependent amination of UTP to CTP with either L-glutamine or ammonia as the source of nitrogen. Constitutes the rate-limiting enzyme in the synthesis of cytosine nucleotides. The polypeptide is CTP synthase 2 (CTPS2) (Bos taurus (Bovine)).